A 50-amino-acid chain; its full sequence is Protein PsbN (50 aa).

The helical transmembrane segment at 14–34 threads the bilayer; sequence VAVTILAVLLALTGFGLWTAF.

Belongs to the PsbN family.

It localises to the cellular thylakoid membrane. Its function is as follows. May play a role in photosystem I and II biogenesis. This Prochlorococcus marinus (strain MIT 9515) protein is Protein PsbN.